We begin with the raw amino-acid sequence, 657 residues long: tRNA uridine 5-carboxymethylaminomethyl modification enzyme MnmG (657 aa).

Position 13-18 (13-18) interacts with FAD; it reads GGGHAG. Residue 281-295 coordinates NAD(+); the sequence is GPRYCPSVEDKINRF.

Belongs to the MnmG family. In terms of assembly, homodimer. Heterotetramer of two MnmE and two MnmG subunits. Requires FAD as cofactor.

Its subcellular location is the cytoplasm. In terms of biological role, NAD-binding protein involved in the addition of a carboxymethylaminomethyl (cmnm) group at the wobble position (U34) of certain tRNAs, forming tRNA-cmnm(5)s(2)U34. The protein is tRNA uridine 5-carboxymethylaminomethyl modification enzyme MnmG of Acidovorax ebreus (strain TPSY) (Diaphorobacter sp. (strain TPSY)).